A 580-amino-acid chain; its full sequence is 2-succinyl-5-enolpyruvyl-6-hydroxy-3-cyclohexene-1-carboxylate synthase (580 aa).

Belongs to the TPP enzyme family. MenD subfamily. Homodimer. It depends on Mg(2+) as a cofactor. Mn(2+) is required as a cofactor. Thiamine diphosphate serves as cofactor.

It catalyses the reaction isochorismate + 2-oxoglutarate + H(+) = 5-enolpyruvoyl-6-hydroxy-2-succinyl-cyclohex-3-ene-1-carboxylate + CO2. The protein operates within quinol/quinone metabolism; 1,4-dihydroxy-2-naphthoate biosynthesis; 1,4-dihydroxy-2-naphthoate from chorismate: step 2/7. It participates in quinol/quinone metabolism; menaquinone biosynthesis. Functionally, catalyzes the thiamine diphosphate-dependent decarboxylation of 2-oxoglutarate and the subsequent addition of the resulting succinic semialdehyde-thiamine pyrophosphate anion to isochorismate to yield 2-succinyl-5-enolpyruvyl-6-hydroxy-3-cyclohexene-1-carboxylate (SEPHCHC). The sequence is that of 2-succinyl-5-enolpyruvyl-6-hydroxy-3-cyclohexene-1-carboxylate synthase from Listeria monocytogenes serotype 4b (strain F2365).